The chain runs to 100 residues: Urease subunit gamma (100 aa).

Belongs to the urease gamma subunit family. As to quaternary structure, heterotrimer of UreA (gamma), UreB (beta) and UreC (alpha) subunits. Three heterotrimers associate to form the active enzyme.

It localises to the cytoplasm. The enzyme catalyses urea + 2 H2O + H(+) = hydrogencarbonate + 2 NH4(+). It functions in the pathway nitrogen metabolism; urea degradation; CO(2) and NH(3) from urea (urease route): step 1/1. The sequence is that of Urease subunit gamma from Cupriavidus pinatubonensis (strain JMP 134 / LMG 1197) (Cupriavidus necator (strain JMP 134)).